The chain runs to 89 residues: Small ribosomal subunit protein uS15 (89 aa).

Belongs to the universal ribosomal protein uS15 family. Part of the 30S ribosomal subunit. Forms a bridge to the 50S subunit in the 70S ribosome, contacting the 23S rRNA.

One of the primary rRNA binding proteins, it binds directly to 16S rRNA where it helps nucleate assembly of the platform of the 30S subunit by binding and bridging several RNA helices of the 16S rRNA. Its function is as follows. Forms an intersubunit bridge (bridge B4) with the 23S rRNA of the 50S subunit in the ribosome. This is Small ribosomal subunit protein uS15 from Pseudomonas entomophila (strain L48).